Reading from the N-terminus, the 390-residue chain is MNFLELQVTLSFCVIFLLRMLGMFMILPILSKYGMLLDGGNKFLIGLSMGIYGISQVIFQIPFGILSDKFNRKKIILLGLFMFFIGNIISASIHSIWGLIIGRFFQGSGAISGVCMAFLSDLIREENRVKSIAAIGVSFAISFLIAVVSGPIIVHYFGFFSIFWISAFLSIVCMIIVCFFVPFSKKNILKQNKTLHSYKKVLNFVLNKVFFRFYLGVFFLHFLLMIKFTMIPNQFEISGFSLDNHWKVYLGTILISFFVLFLFIFYCKYKYILENIIEICILFILFSEIIFLSAQKNLLFLIISLQIFFISFNFLEVFLSSHLSRQLSNNYRGSIMSIYSTSQFLGIFFGGVFSGWLYSFLNFSQIFYFELFIILLWLIFSFFLRNRFYL.

11 consecutive transmembrane segments (helical) span residues 10–30 (LSFC…LPIL), 43–63 (FLIG…QIPF), 81–101 (FMFF…GLII), 134–154 (AIGV…PIIV), 162–182 (IFWI…FFVP), 213–233 (FYLG…MIPN), 246–266 (WKVY…FIFY), 272–292 (ILEN…IIFL), 298–318 (LLFL…LEVF), 341–361 (TSQF…YSFL), and 363–383 (FSQI…FSFF).

It belongs to the major facilitator superfamily.

It is found in the cell membrane. This is an uncharacterized protein from Buchnera aphidicola subsp. Acyrthosiphon pisum (strain APS) (Acyrthosiphon pisum symbiotic bacterium).